Reading from the N-terminus, the 225-residue chain is Ribose-5-phosphate isomerase A (225 aa).

Substrate is bound by residues 26-29 (TGST), 82-85 (DGAD), and 95-98 (KGGG). The active-site Proton acceptor is the E104. K122 provides a ligand contact to substrate.

This sequence belongs to the ribose 5-phosphate isomerase family. In terms of assembly, homodimer.

It carries out the reaction aldehydo-D-ribose 5-phosphate = D-ribulose 5-phosphate. It functions in the pathway carbohydrate degradation; pentose phosphate pathway; D-ribose 5-phosphate from D-ribulose 5-phosphate (non-oxidative stage): step 1/1. In terms of biological role, catalyzes the reversible conversion of ribose-5-phosphate to ribulose 5-phosphate. The polypeptide is Ribose-5-phosphate isomerase A (Streptococcus sanguinis (strain SK36)).